The following is a 445-amino-acid chain: Phosphoglucosamine mutase (445 aa).

The Phosphoserine intermediate role is filled by Ser102. The Mg(2+) site is built by Ser102, Asp241, Asp243, and Asp245. Ser102 carries the post-translational modification Phosphoserine.

This sequence belongs to the phosphohexose mutase family. Requires Mg(2+) as cofactor. Post-translationally, activated by phosphorylation.

It catalyses the reaction alpha-D-glucosamine 1-phosphate = D-glucosamine 6-phosphate. Its function is as follows. Catalyzes the conversion of glucosamine-6-phosphate to glucosamine-1-phosphate. This is Phosphoglucosamine mutase from Novosphingobium aromaticivorans (strain ATCC 700278 / DSM 12444 / CCUG 56034 / CIP 105152 / NBRC 16084 / F199).